A 396-amino-acid chain; its full sequence is Serpin-ZXA (396 aa).

Residues 343-367 are RCL; sequence GTEAAAATAAVITLRSAPIAEDFVA.

Belongs to the serpin family.

Probable serine protease inhibitor. This Oryza sativa subsp. japonica (Rice) protein is Serpin-ZXA.